A 57-amino-acid chain; its full sequence is Large ribosomal subunit protein bL32 (57 aa).

Positions 1–37 (MAVQQNKPTRSKRGMRRSHDALTAVTSLSVDKTSGEK) are disordered.

It belongs to the bacterial ribosomal protein bL32 family.

This Escherichia fergusonii (strain ATCC 35469 / DSM 13698 / CCUG 18766 / IAM 14443 / JCM 21226 / LMG 7866 / NBRC 102419 / NCTC 12128 / CDC 0568-73) protein is Large ribosomal subunit protein bL32.